Consider the following 135-residue polypeptide: Probable histone H2A.8 (135 aa).

This sequence belongs to the histone H2A family. As to quaternary structure, the nucleosome is a histone octamer containing two molecules each of H2A, H2B, H3 and H4 assembled in one H3-H4 heterotetramer and two H2A-H2B heterodimers. The octamer wraps approximately 147 bp of DNA.

Its subcellular location is the nucleus. It is found in the chromosome. Its function is as follows. Core component of nucleosome. Nucleosomes wrap and compact DNA into chromatin, limiting DNA accessibility to the cellular machineries which require DNA as a template. Histones thereby play a central role in transcription regulation, DNA repair, DNA replication and chromosomal stability. DNA accessibility is regulated via a complex set of post-translational modifications of histones, also called histone code, and nucleosome remodeling. The protein is Probable histone H2A.8 of Oryza sativa subsp. indica (Rice).